The following is a 205-amino-acid chain: Guanylate kinase (205 aa).

In terms of domain architecture, Guanylate kinase-like spans 17–195; sequence SRLLVLSGPS…AVEAVERLLF (179 aa). 24–31 contributes to the ATP binding site; that stretch reads GPSGVGKD.

Belongs to the guanylate kinase family.

It is found in the cytoplasm. It catalyses the reaction GMP + ATP = GDP + ADP. Essential for recycling GMP and indirectly, cGMP. The sequence is that of Guanylate kinase from Gloeobacter violaceus (strain ATCC 29082 / PCC 7421).